The sequence spans 823 residues: Semaphorin-4B (823 aa).

Residues 1 to 30 (MGRASRSAVLRRALLLLLLLLLLRTTTTRA) form the signal peptide. At 31–703 (LGPRISVPLG…WGADKSYWNE (673 aa)) the chain is on the extracellular side. The Sema domain maps to 34-510 (RISVPLGSEE…SHSGVVQVPV (477 aa)). N-linked (GlcNAc...) asparagine glycans are attached at residues asparagine 53, asparagine 56, and asparagine 83. A disulfide bridge links cysteine 107 with cysteine 118. Asparagine 129 carries an N-linked (GlcNAc...) asparagine glycan. Intrachain disulfides connect cysteine 136–cysteine 145, cysteine 273–cysteine 386, and cysteine 297–cysteine 346. Residues asparagine 397 and asparagine 512 are each glycosylated (N-linked (GlcNAc...) asparagine). A PSI domain is found at 512–582 (NCSLYPTCGD…RFLVPGKPCK (71 aa)). The cysteines at positions 513 and 530 are disulfide-linked. 3 N-linked (GlcNAc...) asparagine glycosylation sites follow: asparagine 567, asparagine 615, and asparagine 680. The Ig-like C2-type domain occupies 589–649 (NTVNTLACPL…FQCWSIEEGF (61 aa)). Cysteine 596 and cysteine 642 are disulfide-bonded. The helical transmembrane segment at 704-724 (FLVMCTLFVFAMVLLFLFFLY) threads the bilayer. Residues 725–823 (RHRDGMKLFL…LGSEIRDSVV (99 aa)) lie on the Cytoplasmic side of the membrane. Phosphoserine is present on residues serine 779, serine 780, serine 804, and serine 816.

Belongs to the semaphorin family. As to quaternary structure, interacts with GIPC PDZ domain.

Its subcellular location is the membrane. Inhibits axonal extension by providing local signals to specify territories inaccessible for growing axons. This chain is Semaphorin-4B, found in Mus musculus (Mouse).